The sequence spans 328 residues: 6-phosphogluconolactonase (328 aa).

The protein belongs to the cycloisomerase 2 family.

The enzyme catalyses 6-phospho-D-glucono-1,5-lactone + H2O = 6-phospho-D-gluconate + H(+). Its pathway is carbohydrate degradation; pentose phosphate pathway; D-ribulose 5-phosphate from D-glucose 6-phosphate (oxidative stage): step 2/3. Functionally, catalyzes the hydrolysis of 6-phosphogluconolactone to 6-phosphogluconate. The protein is 6-phosphogluconolactonase of Photorhabdus laumondii subsp. laumondii (strain DSM 15139 / CIP 105565 / TT01) (Photorhabdus luminescens subsp. laumondii).